The following is a 176-amino-acid chain: Ribosome rescue factor SmrB (176 aa).

The 76-residue stretch at 98-173 (LDVHGLNQDQ…RSTAILFLIH (76 aa)) folds into the Smr domain.

The protein belongs to the SmrB family. As to quaternary structure, associates with collided ribosomes, but not with correctly translating polysomes.

Functionally, acts as a ribosome collision sensor. Detects stalled/collided disomes (pairs of ribosomes where the leading ribosome is stalled and a second ribosome has collided with it) and endonucleolytically cleaves mRNA at the 5' boundary of the stalled ribosome. Stalled/collided disomes form a new interface (primarily via the 30S subunits) that binds SmrB. Cleaved mRNA becomes available for tmRNA ligation, leading to ribosomal subunit dissociation and rescue of stalled ribosomes. The chain is Ribosome rescue factor SmrB from Buchnera aphidicola subsp. Baizongia pistaciae (strain Bp).